We begin with the raw amino-acid sequence, 133 residues long: S-adenosylmethionine decarboxylase proenzyme (133 aa).

Residue serine 64 is the Schiff-base intermediate with substrate; via pyruvic acid of the active site. Residue serine 64 is modified to Pyruvic acid (Ser); by autocatalysis. Histidine 69 (proton acceptor; for processing activity) is an active-site residue. Residue cysteine 84 is the Proton donor; for catalytic activity of the active site.

The protein belongs to the prokaryotic AdoMetDC family. Type 1 subfamily. In terms of assembly, heterotetramer of two alpha and two beta chains arranged as a dimer of alpha/beta heterodimers. Pyruvate is required as a cofactor. Is synthesized initially as an inactive proenzyme. Formation of the active enzyme involves a self-maturation process in which the active site pyruvoyl group is generated from an internal serine residue via an autocatalytic post-translational modification. Two non-identical subunits are generated from the proenzyme in this reaction, and the pyruvate is formed at the N-terminus of the alpha chain, which is derived from the carboxyl end of the proenzyme. The post-translation cleavage follows an unusual pathway, termed non-hydrolytic serinolysis, in which the side chain hydroxyl group of the serine supplies its oxygen atom to form the C-terminus of the beta chain, while the remainder of the serine residue undergoes an oxidative deamination to produce ammonia and the pyruvoyl group blocking the N-terminus of the alpha chain.

The enzyme catalyses S-adenosyl-L-methionine + H(+) = S-adenosyl 3-(methylsulfanyl)propylamine + CO2. It functions in the pathway amine and polyamine biosynthesis; S-adenosylmethioninamine biosynthesis; S-adenosylmethioninamine from S-adenosyl-L-methionine: step 1/1. Its function is as follows. Catalyzes the decarboxylation of S-adenosylmethionine to S-adenosylmethioninamine (dcAdoMet), the propylamine donor required for the synthesis of the polyamines spermine and spermidine from the diamine putrescine. This chain is S-adenosylmethionine decarboxylase proenzyme, found in Sulfurihydrogenibium sp. (strain YO3AOP1).